The chain runs to 283 residues: ATP synthase gamma chain (283 aa).

This sequence belongs to the ATPase gamma chain family. As to quaternary structure, F-type ATPases have 2 components, CF(1) - the catalytic core - and CF(0) - the membrane proton channel. CF(1) has five subunits: alpha(3), beta(3), gamma(1), delta(1), epsilon(1). CF(0) has three main subunits: a, b and c.

The protein localises to the cell membrane. Its function is as follows. Produces ATP from ADP in the presence of a proton gradient across the membrane. The gamma chain is believed to be important in regulating ATPase activity and the flow of protons through the CF(0) complex. This chain is ATP synthase gamma chain, found in Clostridium botulinum (strain Eklund 17B / Type B).